The following is a 206-amino-acid chain: Ribonuclease HII (206 aa).

Residues alanine 19–glutamate 206 form the RNase H type-2 domain. 3 residues coordinate a divalent metal cation: aspartate 25, glutamate 26, and aspartate 117.

It belongs to the RNase HII family. It depends on Mn(2+) as a cofactor. Requires Mg(2+) as cofactor.

The protein localises to the cytoplasm. It carries out the reaction Endonucleolytic cleavage to 5'-phosphomonoester.. In terms of biological role, endonuclease that specifically degrades the RNA of RNA-DNA hybrids. The polypeptide is Ribonuclease HII (Vibrio cholerae serotype O1 (strain M66-2)).